The chain runs to 276 residues: Undecaprenyl-diphosphatase (276 aa).

8 helical membrane passes run 1 to 21 (MSWL…FLPV), 39 to 59 (AGAS…LVYF), 84 to 104 (YRLG…GLLL), 115 to 135 (LWAI…AEYF), 159 to 179 (LALL…LFLG), 190 to 210 (FLLA…DAFA), 222 to 242 (QLLV…AWFL), and 253 to 273 (FVGY…TGVV).

Belongs to the UppP family.

Its subcellular location is the cell membrane. The enzyme catalyses di-trans,octa-cis-undecaprenyl diphosphate + H2O = di-trans,octa-cis-undecaprenyl phosphate + phosphate + H(+). Catalyzes the dephosphorylation of undecaprenyl diphosphate (UPP). Confers resistance to bacitracin. The chain is Undecaprenyl-diphosphatase from Mycobacterium sp. (strain KMS).